Consider the following 117-residue polypeptide: Immunoglobulin heavy variable 4-28 (117 aa).

An N-terminal signal peptide occupies residues 1-19 (MKHLWFFLLLVAAPRWVLS). A framework-1 region spans residues 20–44 (QVQLQESGPGLVKPSDTLSLTCAVS). The region spanning 20-117 (QVQLQESGPG…VDTAVYYCAR (98 aa)) is the Ig-like domain. C41 and C115 are joined by a disulfide. Residues 45–53 (GYSISSSNW) are complementarity-determining-1. Positions 54 to 70 (WGWIRQPPGKGLEWIGY) are framework-2. Positions 71–77 (IYYSGST) are complementarity-determining-2. Positions 78–115 (YYNPSLKSRVTMSVDTSKNQFSLKLSSVTAVDTAVYYC) are framework-3. The interval 116–117 (AR) is complementarity-determining-3.

In terms of assembly, immunoglobulins are composed of two identical heavy chains and two identical light chains; disulfide-linked.

It is found in the secreted. The protein resides in the cell membrane. V region of the variable domain of immunoglobulin heavy chains that participates in the antigen recognition. Immunoglobulins, also known as antibodies, are membrane-bound or secreted glycoproteins produced by B lymphocytes. In the recognition phase of humoral immunity, the membrane-bound immunoglobulins serve as receptors which, upon binding of a specific antigen, trigger the clonal expansion and differentiation of B lymphocytes into immunoglobulins-secreting plasma cells. Secreted immunoglobulins mediate the effector phase of humoral immunity, which results in the elimination of bound antigens. The antigen binding site is formed by the variable domain of one heavy chain, together with that of its associated light chain. Thus, each immunoglobulin has two antigen binding sites with remarkable affinity for a particular antigen. The variable domains are assembled by a process called V-(D)-J rearrangement and can then be subjected to somatic hypermutations which, after exposure to antigen and selection, allow affinity maturation for a particular antigen. The chain is Immunoglobulin heavy variable 4-28 from Homo sapiens (Human).